The primary structure comprises 304 residues: Killer cell immunoglobulin-like receptor 2DS4 (304 aa).

Positions 1 to 21 (MSLMVIIMACVGFFLLQGAWP) are cleaved as a signal peptide. Topologically, residues 22 to 245 (QEGVHRKPSF…SKTGNPRHLH (224 aa)) are extracellular. 2 Ig-like C2-type domains span residues 42–107 (EETV…VPHS) and 142–205 (GENV…FRDA). Cys-49 and Cys-100 are oxidised to a cystine. 5 N-linked (GlcNAc...) asparagine glycosylation sites follow: Asn-67, Asn-84, Asn-144, Asn-178, and Asn-211. A disulfide bridge connects residues Cys-149 and Cys-198. The disordered stretch occupies residues 220–239 (VTGNPSNSWPSPTEPSSKTG). A helical transmembrane segment spans residues 246-265 (VLIGTSVVKIPFTILLFFLL). At 266–304 (HRWCSDKKNAAVMDQEPAGNRTVNSEDSDEQDHQEVSYA) the chain is on the cytoplasmic side. The tract at residues 280-304 (QEPAGNRTVNSEDSDEQDHQEVSYA) is disordered.

The protein belongs to the immunoglobulin superfamily. In terms of assembly, interacts with HLA-F; this interaction is direct.

It is found in the cell membrane. Functionally, receptor on natural killer (NK) cells for HLA-C alleles. Does not inhibit the activity of NK cells. In Homo sapiens (Human), this protein is Killer cell immunoglobulin-like receptor 2DS4.